The sequence spans 172 residues: Peptide deformylase (172 aa).

Fe cation is bound by residues Cys-91 and His-133. Residue Glu-134 is part of the active site. His-137 lines the Fe cation pocket.

The protein belongs to the polypeptide deformylase family. The cofactor is Fe(2+).

It catalyses the reaction N-terminal N-formyl-L-methionyl-[peptide] + H2O = N-terminal L-methionyl-[peptide] + formate. Removes the formyl group from the N-terminal Met of newly synthesized proteins. Requires at least a dipeptide for an efficient rate of reaction. N-terminal L-methionine is a prerequisite for activity but the enzyme has broad specificity at other positions. The sequence is that of Peptide deformylase from Vibrio campbellii (strain ATCC BAA-1116).